We begin with the raw amino-acid sequence, 1452 residues long: Protein clueless (1452 aa).

Disordered regions lie at residues 1–93 and 266–288; these read MALE…SNGH and KKTRPDSVDCTPPEYVTPGVSEP. Residues 8 to 24 are compositionally biased toward low complexity; the sequence is KNSNATATSDATATKAS. Positions 42–59 are enriched in polar residues; the sequence is PIPNSNHQNSNQNLVNGN. Positions 68 to 77 are enriched in basic residues; sequence AKKKGKKNRN. Ser272 carries the phosphoserine modification. In terms of domain architecture, Clu spans 426–668; the sequence is RAEDAFSSKL…RTFPPDVNFL (243 aa). 3 disordered regions span residues 726-775, 962-1013, and 1414-1452; these read KQSE…GDTK, AVSS…SSVS, and ANNNGEAEDAVPKDVEEQKEAGTQLTNGEKAAATEATSS. Residues 750–766 are compositionally biased toward basic and acidic residues; the sequence is GADKTDVKEEKNEENEK. Positions 970–985 are enriched in basic residues; that stretch reads KKRGNGGKHNKHKSSK. Over residues 990–1013 the composition is skewed to low complexity; it reads QQQQQATGNQNGSSSGSSNGSSVS. A compositionally biased stretch (basic and acidic residues) spans 1423–1433; that stretch reads AVPKDVEEQKE.

This sequence belongs to the CLU family.

The protein localises to the cytoplasm. In terms of biological role, mRNA-binding protein involved in proper cytoplasmic distribution of mitochondria. The sequence is that of Protein clueless from Drosophila erecta (Fruit fly).